The primary structure comprises 2339 residues: DNA-directed RNA polymerase III subunit RPC1 (2339 aa).

Residues cysteine 88, cysteine 91, cysteine 98, histidine 101, cysteine 128, cysteine 131, and cysteine 175 each contribute to the Zn(2+) site. The Mg(2+) site is built by aspartate 611, aspartate 613, and aspartate 615. The interval 955–967 (PTEFFFHTMSGRE) is bridging helix. Disordered stretches follow at residues 1503–1557 (EKRK…NNYY) and 2038–2079 (LKSE…DSDR). The span at 1509–1520 (PKEEKENFDRNN) shows a compositional bias: basic and acidic residues. The span at 1521–1557 (YKMITDNNNNDNNNNNNDNNNNDNNNNNNNSNNNNYY) shows a compositional bias: low complexity. Residues 2038–2047 (LKSEKKKDIN) are compositionally biased toward basic and acidic residues. Residues 2049 to 2059 (DNNNNDDNNNN) show a composition bias toward low complexity.

This sequence belongs to the RNA polymerase beta' chain family. As to quaternary structure, component of the RNA polymerase III (Pol III) complex consisting of 17 subunits.

It is found in the nucleus. It carries out the reaction RNA(n) + a ribonucleoside 5'-triphosphate = RNA(n+1) + diphosphate. In terms of biological role, DNA-dependent RNA polymerase catalyzes the transcription of DNA into RNA using the four ribonucleoside triphosphates as substrates. Largest and catalytic core component of RNA polymerase III which synthesizes small RNAs, such as 5S rRNA and tRNAs. Forms the polymerase active center together with the second largest subunit. A single-stranded DNA template strand of the promoter is positioned within the central active site cleft of Pol III. A bridging helix emanates from RPC1 and crosses the cleft near the catalytic site and is thought to promote translocation of Pol III by acting as a ratchet that moves the RNA-DNA hybrid through the active site by switching from straight to bent conformations at each step of nucleotide addition. The chain is DNA-directed RNA polymerase III subunit RPC1 from Plasmodium falciparum.